A 156-amino-acid polypeptide reads, in one-letter code: ATP synthase subunit b (156 aa).

A helical membrane pass occupies residues 7-27; sequence LFAQLVVFFILAWFTMKFVWP.

The protein belongs to the ATPase B chain family. F-type ATPases have 2 components, F(1) - the catalytic core - and F(0) - the membrane proton channel. F(1) has five subunits: alpha(3), beta(3), gamma(1), delta(1), epsilon(1). F(0) has four main subunits: a(1), b(2) and c(10-14). The alpha and beta chains form an alternating ring which encloses part of the gamma chain. F(1) is attached to F(0) by a central stalk formed by the gamma and epsilon chains, while a peripheral stalk is formed by the delta and b chains.

Its subcellular location is the cell inner membrane. F(1)F(0) ATP synthase produces ATP from ADP in the presence of a proton or sodium gradient. F-type ATPases consist of two structural domains, F(1) containing the extramembraneous catalytic core and F(0) containing the membrane proton channel, linked together by a central stalk and a peripheral stalk. During catalysis, ATP synthesis in the catalytic domain of F(1) is coupled via a rotary mechanism of the central stalk subunits to proton translocation. Its function is as follows. Component of the F(0) channel, it forms part of the peripheral stalk, linking F(1) to F(0). In Methylibium petroleiphilum (strain ATCC BAA-1232 / LMG 22953 / PM1), this protein is ATP synthase subunit b.